Here is a 591-residue protein sequence, read N- to C-terminus: Inactive metallocarboxypeptidase ECM14 (591 aa).

A signal peptide spans 1–21 (MRLFSHLAVLAILACAVPITA). Positions 22 to 175 (IPSFLSNSYP…QTIYESYPSS (154 aa)) are excised as a propeptide. Residues 203-523 (DYQPFSVIVP…NAVMVLGRFL (321 aa)) form the Peptidase M14 domain. His-265 and Glu-268 together coordinate Zn(2+). Residues 265 to 268 (HARE), Arg-323, and 340 to 341 (DR) each bind substrate. Cys-334 and Cys-357 form a disulfide bridge. Residues Asn-350, Asn-381, and Asn-386 are each glycosylated (N-linked (GlcNAc...) asparagine). Zn(2+) is bound at residue His-397. Residue 398–399 (SY) participates in substrate binding. Residues 533 to 591 (DWEDESQRPKADEDDIPSENELDENDDSWIPYDYRNHDDQNEGEGYDNDEWGFRRRRKR) form a disordered region. Composition is skewed to acidic residues over residues 544–559 (DEDDIPSENELDENDD) and 573–582 (NEGEGYDNDE).

Belongs to the peptidase M14 family. Zn(2+) serves as cofactor.

It localises to the vacuole. It is found in the secreted. Functionally, inactive carboxypeptidase that may play a role in cell wall organization and biogenesis. The chain is Inactive metallocarboxypeptidase ECM14 (ECM14) from Paracoccidioides brasiliensis (strain Pb18).